Consider the following 153-residue polypeptide: ORM1-like protein 3 (153 aa).

The segment at 1–17 (MNVGTAHSEVNPNTRVM) is important for ceramide level-sensing. Topologically, residues 1-21 (MNVGTAHSEVNPNTRVMNSRG) are cytoplasmic. The next 2 membrane-spanning stretches (helical) occupy residues 22-42 (IWLSYVLAIGLLHVVLLSIPF) and 43-63 (VSVPVVWTLTNLIHNLGMYIF). Residues 64 to 94 (LHTVKGTPFETPDQGKARLLTHWEQMDYGVQ) lie on the Cytoplasmic side of the membrane. The helical transmembrane segment at 95–117 (FTASRKFLTITPIVLYFLTSFYT) threads the bilayer. Residues 118 to 121 (KYDQ) lie on the Extracellular side of the membrane. A helical transmembrane segment spans residues 122 to 142 (VHFILNTVSLMSVLIPKLPQL). P137 bears the Hydroxyproline mark. Residues 143–153 (HGVRIFGINKY) lie on the Cytoplasmic side of the membrane.

Belongs to the ORM family. Ceramide-sensitive subunit of the serine palmitoyltransferase (SPT) complex, which is also composed of SPTLC1, SPTLC2/3 and SPTSSA/B. When hydroxylated at Pro-137, ubiquitinated via 'Lys-48'-linkage, leading to proteasomal degradation. In endothelial cells, ORMDL3 proteasomal degradation is controlled by the sphingosine 1-phosphate receptor signaling pathway.

It is found in the endoplasmic reticulum membrane. Its function is as follows. Plays an essential role in the homeostatic regulation of sphingolipid de novo biosynthesis by modulating the activity of the serine palmitoyltransferase (SPT) in response to ceramide levels. When complexed to SPT, the binding of ceramides to its N-terminus stabilizes a conformation that block SPT substrate entry, hence preventing SPT catalytic activity. Through this mechanism, maintains ceramide levels at sufficient concentrations for the production of complex sphingolipids, but which prevents the accumulation of ceramides to levels that trigger apoptosis. The polypeptide is ORM1-like protein 3 (Ormdl3) (Rattus norvegicus (Rat)).